Consider the following 208-residue polypeptide: Translation initiation factor IF-3 (208 aa).

It belongs to the IF-3 family. As to quaternary structure, monomer.

The protein localises to the cytoplasm. IF-3 binds to the 30S ribosomal subunit and shifts the equilibrium between 70S ribosomes and their 50S and 30S subunits in favor of the free subunits, thus enhancing the availability of 30S subunits on which protein synthesis initiation begins. This is Translation initiation factor IF-3 from Parabacteroides distasonis (strain ATCC 8503 / DSM 20701 / CIP 104284 / JCM 5825 / NCTC 11152).